Here is a 365-residue protein sequence, read N- to C-terminus: Alternative oxidase 2, mitochondrial (365 aa).

Over residues 32–46 (TPPHSTTTTSPSSPA) the composition is skewed to low complexity. Residues 32 to 52 (TPPHSTTTTSPSSPAFHQPNH) form a disordered region. Fe cation-binding residues include Glu166, Glu205, and His208. The chain crosses the membrane as a helical span at residues 220 to 242 (WFTRSIIYVGQGVFTNVFFLLYL). Residues Glu256, Glu257, Glu312, and His315 each contribute to the Fe cation site. The interval 345 to 365 (QPNHGINVMRPTGWEKQDLQL) is disordered.

This sequence belongs to the alternative oxidase family. Fe cation serves as cofactor.

It is found in the mitochondrion inner membrane. Catalyzes cyanide-resistant oxygen consumption. May increase respiration when the cytochrome respiratory pathway is restricted, or in response to low temperatures. This chain is Alternative oxidase 2, mitochondrial (AOX2), found in Candida albicans (Yeast).